The chain runs to 176 residues: Ribosome rescue factor SmrB (176 aa).

The region spanning L93–D168 is the Smr domain.

This sequence belongs to the SmrB family. As to quaternary structure, associates with collided ribosomes, but not with correctly translating polysomes.

In terms of biological role, acts as a ribosome collision sensor. Detects stalled/collided disomes (pairs of ribosomes where the leading ribosome is stalled and a second ribosome has collided with it) and endonucleolytically cleaves mRNA at the 5' boundary of the stalled ribosome. Stalled/collided disomes form a new interface (primarily via the 30S subunits) that binds SmrB. Cleaved mRNA becomes available for tmRNA ligation, leading to ribosomal subunit dissociation and rescue of stalled ribosomes. The protein is Ribosome rescue factor SmrB of Shewanella baltica (strain OS155 / ATCC BAA-1091).